The sequence spans 237 residues: Thiamine-phosphate synthase (237 aa).

4-amino-2-methyl-5-(diphosphooxymethyl)pyrimidine is bound by residues 57-61 (QLRDK) and Asn98. Mg(2+) is bound by residues Asp99 and Asp118. Residue Ser136 coordinates 4-amino-2-methyl-5-(diphosphooxymethyl)pyrimidine. A 2-[(2R,5Z)-2-carboxy-4-methylthiazol-5(2H)-ylidene]ethyl phosphate-binding site is contributed by 162-164 (TPT). Residue Lys165 participates in 4-amino-2-methyl-5-(diphosphooxymethyl)pyrimidine binding. Gly193 is a binding site for 2-[(2R,5Z)-2-carboxy-4-methylthiazol-5(2H)-ylidene]ethyl phosphate.

The protein belongs to the thiamine-phosphate synthase family. Mg(2+) serves as cofactor.

The catalysed reaction is 2-[(2R,5Z)-2-carboxy-4-methylthiazol-5(2H)-ylidene]ethyl phosphate + 4-amino-2-methyl-5-(diphosphooxymethyl)pyrimidine + 2 H(+) = thiamine phosphate + CO2 + diphosphate. The enzyme catalyses 2-(2-carboxy-4-methylthiazol-5-yl)ethyl phosphate + 4-amino-2-methyl-5-(diphosphooxymethyl)pyrimidine + 2 H(+) = thiamine phosphate + CO2 + diphosphate. It carries out the reaction 4-methyl-5-(2-phosphooxyethyl)-thiazole + 4-amino-2-methyl-5-(diphosphooxymethyl)pyrimidine + H(+) = thiamine phosphate + diphosphate. It participates in cofactor biosynthesis; thiamine diphosphate biosynthesis; thiamine phosphate from 4-amino-2-methyl-5-diphosphomethylpyrimidine and 4-methyl-5-(2-phosphoethyl)-thiazole: step 1/1. In terms of biological role, condenses 4-methyl-5-(beta-hydroxyethyl)thiazole monophosphate (THZ-P) and 2-methyl-4-amino-5-hydroxymethyl pyrimidine pyrophosphate (HMP-PP) to form thiamine monophosphate (TMP). The protein is Thiamine-phosphate synthase of Mycolicibacterium gilvum (strain PYR-GCK) (Mycobacterium gilvum (strain PYR-GCK)).